The following is a 202-amino-acid chain: Cytochrome c oxidase assembly protein CtaG (202 aa).

Residues 1 to 14 (MSENAGTPKKQGRN) lie on the Cytoplasmic side of the membrane. A helical; Signal-anchor for type II membrane protein membrane pass occupies residues 15–37 (NGAVVMMCLSFVFGMGAMSYAAV). Topologically, residues 38–202 (PLYRIFCQVT…GGAEKIEKKL (165 aa)) are periplasmic.

Belongs to the COX11/CtaG family.

The protein resides in the cell inner membrane. Its function is as follows. Exerts its effect at some terminal stage of cytochrome c oxidase synthesis, probably by being involved in the insertion of the copper B into subunit I. This is Cytochrome c oxidase assembly protein CtaG from Rhizobium johnstonii (strain DSM 114642 / LMG 32736 / 3841) (Rhizobium leguminosarum bv. viciae).